A 135-amino-acid chain; its full sequence is MATRAQAREAVVSLLYAYDMGNTEIRKFAIELLEEKRIKNRQQEFALELFDGTIAHLGEIDEEIKKHLKEWDFSRIGDMERAILRLGTFEIVYSGVDRAVIINEAVELSKTFGNDNSPRFVNGVLDALRPDLKKG.

Belongs to the NusB family.

Involved in transcription antitermination. Required for transcription of ribosomal RNA (rRNA) genes. Binds specifically to the boxA antiterminator sequence of the ribosomal RNA (rrn) operons. In Wolinella succinogenes (strain ATCC 29543 / DSM 1740 / CCUG 13145 / JCM 31913 / LMG 7466 / NCTC 11488 / FDC 602W) (Vibrio succinogenes), this protein is Transcription antitermination protein NusB.